We begin with the raw amino-acid sequence, 104 residues long: uncharacterized protein (104 aa).

This is an uncharacterized protein from Saccharomyces cerevisiae (strain ATCC 204508 / S288c) (Baker's yeast).